The sequence spans 302 residues: Deoxyribonuclease-1-like 1 (302 aa).

Positions 1 to 18 (MHYPTALLFLILANGAQA) are cleaved as a signal peptide. Residues E97 and H148 contribute to the active site. Cysteines 187 and 224 form a disulfide. N261 carries an N-linked (GlcNAc...) asparagine glycan.

The protein belongs to the DNase I family. As to expression, highest levels in skeletal and cardiac muscles. Detectable in all other tissues tested except brain.

It is found in the endoplasmic reticulum. The sequence is that of Deoxyribonuclease-1-like 1 (DNASE1L1) from Homo sapiens (Human).